A 70-amino-acid chain; its full sequence is uncharacterized protein (70 aa).

This is an uncharacterized protein from Schizosaccharomyces pombe (strain 972 / ATCC 24843) (Fission yeast).